Here is a 123-residue protein sequence, read N- to C-terminus: Small ribosomal subunit protein uS12 (123 aa).

The segment at 1–23 (MPTISQLVKKGREKVEKKTKSPA) is disordered. Residue D89 is modified to 3-methylthioaspartic acid.

Belongs to the universal ribosomal protein uS12 family. In terms of assembly, part of the 30S ribosomal subunit. Contacts proteins S8 and S17. May interact with IF1 in the 30S initiation complex.

Its function is as follows. With S4 and S5 plays an important role in translational accuracy. Functionally, interacts with and stabilizes bases of the 16S rRNA that are involved in tRNA selection in the A site and with the mRNA backbone. Located at the interface of the 30S and 50S subunits, it traverses the body of the 30S subunit contacting proteins on the other side and probably holding the rRNA structure together. The combined cluster of proteins S8, S12 and S17 appears to hold together the shoulder and platform of the 30S subunit. This Thermodesulfovibrio yellowstonii (strain ATCC 51303 / DSM 11347 / YP87) protein is Small ribosomal subunit protein uS12.